Consider the following 233-residue polypeptide: Phosphoenolpyruvate guanylyltransferase 1 (233 aa).

The phosphoenolpyruvate site is built by Thr-154, Gly-171, and Ser-174.

The protein belongs to the CofC family.

The catalysed reaction is phosphoenolpyruvate + GTP + H(+) = enolpyruvoyl-2-diphospho-5'-guanosine + diphosphate. It functions in the pathway cofactor biosynthesis; coenzyme F420 biosynthesis. In terms of biological role, guanylyltransferase that catalyzes the activation of phosphoenolpyruvate (PEP) as enolpyruvoyl-2-diphospho-5'-guanosine, via the condensation of PEP with GTP. It is involved in the biosynthesis of coenzyme F420, a hydride carrier cofactor. This chain is Phosphoenolpyruvate guanylyltransferase 1, found in Rhodococcus jostii (strain RHA1).